Consider the following 257-residue polypeptide: Imidazole glycerol phosphate synthase subunit HisF (257 aa).

Residues Asp-11 and Asp-130 contribute to the active site.

Belongs to the HisA/HisF family. In terms of assembly, heterodimer of HisH and HisF.

It is found in the cytoplasm. The enzyme catalyses 5-[(5-phospho-1-deoxy-D-ribulos-1-ylimino)methylamino]-1-(5-phospho-beta-D-ribosyl)imidazole-4-carboxamide + L-glutamine = D-erythro-1-(imidazol-4-yl)glycerol 3-phosphate + 5-amino-1-(5-phospho-beta-D-ribosyl)imidazole-4-carboxamide + L-glutamate + H(+). The protein operates within amino-acid biosynthesis; L-histidine biosynthesis; L-histidine from 5-phospho-alpha-D-ribose 1-diphosphate: step 5/9. Functionally, IGPS catalyzes the conversion of PRFAR and glutamine to IGP, AICAR and glutamate. The HisF subunit catalyzes the cyclization activity that produces IGP and AICAR from PRFAR using the ammonia provided by the HisH subunit. In Actinobacillus pleuropneumoniae serotype 7 (strain AP76), this protein is Imidazole glycerol phosphate synthase subunit HisF.